The following is a 390-amino-acid chain: Succinate--CoA ligase [ADP-forming] subunit beta (390 aa).

The ATP-grasp domain maps to 9 to 248 (KDILRKFGVT…TSEEDPFEVE (240 aa)). ATP is bound by residues Lys50, 57–59 (GRG), Glu103, Met106, and Glu111. Residues Asn203 and Asp217 each contribute to the Mg(2+) site. Substrate is bound by residues Asn268 and 325–327 (GIV).

Belongs to the succinate/malate CoA ligase beta subunit family. In terms of assembly, heterotetramer of two alpha and two beta subunits. It depends on Mg(2+) as a cofactor.

The catalysed reaction is succinate + ATP + CoA = succinyl-CoA + ADP + phosphate. It catalyses the reaction GTP + succinate + CoA = succinyl-CoA + GDP + phosphate. The protein operates within carbohydrate metabolism; tricarboxylic acid cycle; succinate from succinyl-CoA (ligase route): step 1/1. Succinyl-CoA synthetase functions in the citric acid cycle (TCA), coupling the hydrolysis of succinyl-CoA to the synthesis of either ATP or GTP and thus represents the only step of substrate-level phosphorylation in the TCA. The beta subunit provides nucleotide specificity of the enzyme and binds the substrate succinate, while the binding sites for coenzyme A and phosphate are found in the alpha subunit. The protein is Succinate--CoA ligase [ADP-forming] subunit beta of Chlorobium chlorochromatii (strain CaD3).